A 615-amino-acid chain; its full sequence is Aspartokinase (615 aa).

2 disordered regions span residues 84–105 (ALQP…GTAT) and 127–171 (SSVS…SISQ). Low complexity-rich tracts occupy residues 90–102 (SSSG…SMSG) and 127–164 (SSVS…ATPS). One can recognise an ACT domain in the interval 467 to 537 (IHSNRKTLSH…EVTVSKDMAI (71 aa)).

The protein belongs to the aspartokinase family.

It catalyses the reaction L-aspartate + ATP = 4-phospho-L-aspartate + ADP. It functions in the pathway amino-acid biosynthesis; L-methionine biosynthesis via de novo pathway; L-homoserine from L-aspartate: step 1/3. Its pathway is amino-acid biosynthesis; L-threonine biosynthesis; L-threonine from L-aspartate: step 1/5. Its function is as follows. Phosphorylates aspartate, the first step in the biosynthesis of amino acids that derive from aspartate (the aspartate family of amino acids), including methioinine and threonine, the latter of which is a precursor to isoleucine. This chain is Aspartokinase, found in Cryptococcus neoformans var. grubii serotype A (strain H99 / ATCC 208821 / CBS 10515 / FGSC 9487) (Filobasidiella neoformans var. grubii).